Reading from the N-terminus, the 405-residue chain is Tryptophan synthase beta chain (405 aa).

N6-(pyridoxal phosphate)lysine is present on K95.

Belongs to the TrpB family. In terms of assembly, tetramer of two alpha and two beta chains. The cofactor is pyridoxal 5'-phosphate.

It catalyses the reaction (1S,2R)-1-C-(indol-3-yl)glycerol 3-phosphate + L-serine = D-glyceraldehyde 3-phosphate + L-tryptophan + H2O. Its pathway is amino-acid biosynthesis; L-tryptophan biosynthesis; L-tryptophan from chorismate: step 5/5. The beta subunit is responsible for the synthesis of L-tryptophan from indole and L-serine. This is Tryptophan synthase beta chain from Pseudomonas putida (strain ATCC 47054 / DSM 6125 / CFBP 8728 / NCIMB 11950 / KT2440).